A 1896-amino-acid chain; its full sequence is Trinucleotide repeat-containing gene 6A protein (1896 aa).

Composition is skewed to basic and acidic residues over residues 1 to 21 (MRELEAKATKDVERNLSRDLV) and 39 to 57 (KKKEAAQKKATEQKIKVPE). Disordered regions lie at residues 1–137 (MREL…LLKR), 159–209 (SESS…DCST), 222–250 (EAWPSAPGSDPELAPECIDADSASNSESE), and 257–276 (ASGNTGGEKDGLRNSTGLGS). Residues 1-917 (MRELEAKATK…GDPPKCNQSL (917 aa)) are interaction with argonaute family proteins. Composition is skewed to low complexity over residues 69–93 (ANSDNGTSTATSTNNNAKRATASNQ) and 101–113 (QQPQQEQQQQQPQ). Residues 125 to 137 (RFRHQEHKQLLKR) are compositionally biased toward basic residues. The segment at 239 to 488 (IDADSASNSE…QAPSVMNGTS (250 aa)) is sufficient for interaction with AGO1, AGO3 and AGO4. Sufficient for interaction with AGO2 regions lie at residues 255-331 (VMAS…NAWG), 303-384 (GALI…STIG), 325-424 (NRMN…KVSF), 394-480 (SKVS…QIQA), and 487-736 (TSLS…NGTE). Polar residues-rich tracts occupy residues 396-410 (VSGSSTHGTWGSLQE) and 417-429 (SGTQKVSFSGQPQ). Disordered regions lie at residues 396-461 (VSGS…NELP), 548-683 (FQVN…RRKI), 703-998 (LSNS…DPSK), 1011-1126 (IPEA…PTGW), and 1143-1182 (QELNSSLNWPPYTKKMSSKGLSGKKRRRERGMMKGGNKQE). Positions 430 to 443 (NITTETTGPNNTTN) are enriched in low complexity. Over residues 444 to 461 (FMTSSLPNSGSVQNNELP) the composition is skewed to polar residues. A sufficient for interaction with AGO1 and AGO4 region spans residues 551–1279 (NTNKGGGVWE…MFGVGNTAAQ (729 aa)). Over residues 573 to 584 (SGNGANSGGSRR) the composition is skewed to gly residues. Composition is skewed to polar residues over residues 591-617 (QNTGTGLSSVEWNKLPSNQHSNDSANG) and 635-647 (GSATSQTNEQNSV). A compositionally biased stretch (basic and acidic residues) spans 665-683 (GRLEEKVTGESQSRDRRKI). Over residues 703–722 (LSNSGWGQTPIKQNTAWDTE) the composition is skewed to polar residues. The span at 723–733 (TSPRGERKTDN) shows a compositional bias: basic and acidic residues. Serine 724 is subject to Phosphoserine. Residues 738 to 766 (WGSSATQTFNSGACTDKTSPNSNDTSSVS) show a composition bias toward polar residues. A compositionally biased stretch (low complexity) spans 858 to 871 (SSSGGSDSDRSISG). Serine 863 carries the phosphoserine modification. 2 stretches are compositionally biased toward polar residues: residues 876–906 (GKTSSFTWGNNINPNNSSGWDESSKPNSSQG) and 924–937 (KPVSSPDWNKQQDI). The residue at position 976 (serine 976) is a Phosphoserine. Composition is skewed to polar residues over residues 1033 to 1042 (AVSSKETSSG), 1054 to 1064 (TPATTVDNGTS), and 1082 to 1105 (AASNASTWGSSSVGPQSLSKSGPK). Positions 1059–1129 (VDNGTSAWGK…GSRPTGWEEE (71 aa)) are sufficient for interaction with AGO2. Positions 1143–1163 (QELNSSLNWPPYTKKMSSKGL) are enriched in low complexity. Phosphoserine is present on residues serine 1197 and serine 1255. Disordered regions lie at residues 1234–1256 (GDYNRTVGKGPGSRPQISKESSM), 1273–1306 (VGNTAAQPRGMQQPPAQPLSSSQPNLRAQVPPPL), and 1360–1395 (QRAQSQRSAPSANRQQQDQQGRPLSVQQQMMQQSRQ). Composition is skewed to low complexity over residues 1284 to 1296 (QQPPAQPLSSSQP) and 1360 to 1376 (QRAQSQRSAPSANRQQQ). A Phosphothreonine modification is found at threonine 1406. Disordered regions lie at residues 1512 to 1570 (MNSS…VTPG) and 1659 to 1685 (PKNITAPSRPPPGLTGQKPPLSTWDNS). At serine 1520 the chain carries Phosphoserine. Positions 1605 to 1896 (TSAWSSIRAS…DHLGGGGESM (292 aa)) are sufficient for interaction with AGO2. One can recognise an RRM domain in the interval 1716–1788 (NWLVLKNLTP…TTILAEFASE (73 aa)). Residues serine 1804 and serine 1825 each carry the phosphoserine modification.

The protein belongs to the GW182 family. Interacts with AGO2. Interacts with AGO1, AGO3 and AGO4. Interacts with CNOT1; the interaction is direct and mediates the association with the CCR4-NOT complex. Interacts with ZC3H12A. Interacts with SND1. Interacts with GARRE1.

The protein resides in the cytoplasm. Its subcellular location is the P-body. In terms of biological role, plays a role in RNA-mediated gene silencing by both micro-RNAs (miRNAs) and short interfering RNAs (siRNAs). Required for miRNA-dependent repression of translation and for siRNA-dependent endonucleolytic cleavage of complementary mRNAs by argonaute family proteins. As a scaffolding protein, associates with argonaute proteins bound to partially complementary mRNAs, and can simultaneously recruit CCR4-NOT and PAN deadenylase complexes. The protein is Trinucleotide repeat-containing gene 6A protein (Tnrc6a) of Mus musculus (Mouse).